The sequence spans 271 residues: Acetyl-coenzyme A carboxylase carboxyl transferase subunit alpha (271 aa).

The 247-residue stretch at 1–247 (MSRELIRTVD…KKTILEALGE (247 aa)) folds into the CoA carboxyltransferase C-terminal domain.

This sequence belongs to the AccA family. In terms of assembly, acetyl-CoA carboxylase is a heterohexamer composed of biotin carboxyl carrier protein (AccB), biotin carboxylase (AccC) and two subunits each of ACCase subunit alpha (AccA) and ACCase subunit beta (AccD).

Its subcellular location is the cytoplasm. It catalyses the reaction N(6)-carboxybiotinyl-L-lysyl-[protein] + acetyl-CoA = N(6)-biotinyl-L-lysyl-[protein] + malonyl-CoA. It participates in lipid metabolism; malonyl-CoA biosynthesis; malonyl-CoA from acetyl-CoA: step 1/1. Component of the acetyl coenzyme A carboxylase (ACC) complex. First, biotin carboxylase catalyzes the carboxylation of biotin on its carrier protein (BCCP) and then the CO(2) group is transferred by the carboxyltransferase to acetyl-CoA to form malonyl-CoA. The sequence is that of Acetyl-coenzyme A carboxylase carboxyl transferase subunit alpha from Clostridium perfringens (strain SM101 / Type A).